The primary structure comprises 74 residues: DNA-directed RNA polymerase subunit omega (74 aa).

This sequence belongs to the RNA polymerase subunit omega family. In terms of assembly, the RNAP catalytic core consists of 2 alpha, 1 beta/beta' and 1 omega subunit. When a sigma factor is associated with the core the holoenzyme is formed, which can initiate transcription.

The enzyme catalyses RNA(n) + a ribonucleoside 5'-triphosphate = RNA(n+1) + diphosphate. Promotes RNA polymerase assembly. Latches the N- and C-terminal regions of the beta' subunit thereby facilitating its interaction with the beta and alpha subunits. In Helicobacter hepaticus (strain ATCC 51449 / 3B1), this protein is DNA-directed RNA polymerase subunit omega.